Here is a 137-residue protein sequence, read N- to C-terminus: NADH dehydrogenase [ubiquinone] 1 beta subcomplex subunit 7 (137 aa).

A lipid anchor (N-myristoyl glycine) is attached at Gly-2. One can recognise a CHCH domain in the interval Arg-56–Arg-98. A Cx9C motif 1 motif is present at residues Cys-59 to Cys-69. 2 cysteine pairs are disulfide-bonded: Cys-59-Cys-90 and Cys-69-Cys-80. Residue Ser-73 is modified to Phosphoserine. Residues Cys-80–Cys-90 carry the Cx9C motif 2 motif. Residues Lys-113–Leu-137 form a disordered region.

It belongs to the complex I NDUFB7 subunit family. As to quaternary structure, complex I is composed of 45 different subunits.

It is found in the mitochondrion inner membrane. The protein localises to the mitochondrion intermembrane space. Functionally, accessory subunit of the mitochondrial membrane respiratory chain NADH dehydrogenase (Complex I), that is believed not to be involved in catalysis. Complex I functions in the transfer of electrons from NADH to the respiratory chain. The immediate electron acceptor for the enzyme is believed to be ubiquinone. This Pan troglodytes (Chimpanzee) protein is NADH dehydrogenase [ubiquinone] 1 beta subcomplex subunit 7 (NDUFB7).